A 271-amino-acid polypeptide reads, in one-letter code: Histone chaperone asf-1 (271 aa).

The tract at residues 152-271 is disordered; the sequence is KWDSEASAPP…PKQQGMAMAQ (120 aa). 2 stretches are compositionally biased toward acidic residues: residues 168–185 and 211–258; these read PEADEVADEEEYGADELA and IEED…EMEI.

It belongs to the ASF1 family. In terms of assembly, interacts with histone H3 and histone H4.

The protein resides in the nucleus. In terms of biological role, histone chaperone that facilitates histone deposition and histone exchange and removal during nucleosome assembly and disassembly. This Neurospora crassa (strain ATCC 24698 / 74-OR23-1A / CBS 708.71 / DSM 1257 / FGSC 987) protein is Histone chaperone asf-1 (asf-1).